Consider the following 180-residue polypeptide: Ribosome maturation factor RimM (180 aa).

The PRC barrel domain occupies 99-172 (EDEFYQVDLI…FLVVDPVAAG (74 aa)).

It belongs to the RimM family. Binds ribosomal protein uS19.

Its subcellular location is the cytoplasm. Its function is as follows. An accessory protein needed during the final step in the assembly of 30S ribosomal subunit, possibly for assembly of the head region. Essential for efficient processing of 16S rRNA. May be needed both before and after RbfA during the maturation of 16S rRNA. It has affinity for free ribosomal 30S subunits but not for 70S ribosomes. The chain is Ribosome maturation factor RimM from Bartonella henselae (strain ATCC 49882 / DSM 28221 / CCUG 30454 / Houston 1) (Rochalimaea henselae).